Consider the following 1119-residue polypeptide: MSQSSTRKRLIQWSPHNKSSFIVGSNDLRLYNFKFKDKNEKKNENNINNSNQYNQNNQQQQQQQIQQQQQQQQQQQQQQQQQQQQQQQQQQQQHDIYSPKSITSKYMETYNFDIEYPPDDWVPQEKKTISLMSVNSDVQLMKCMAWCPDESDTNLIACGLTSGRAILTSFSSVNRILKELVPKHTRSCNAISWNPIYTNQLAVGLDKVRGDSSTLIWDINYLQSTTLNNHLHKNNNNYISKLQQQQNNIDQPYIISQISDNSFSTSTDYTDTIYQPISEFTQSEATLALAWLPNNPSCLLVGTGSKWLKLYDIRDVNSSQSVMAHQKSVNGVCVDPFDFNRIATMSEDSHIKVWDLRNLDDPLIIVNSNCKSIQQIDWCPTRSGVLASVGKDKSSIKLWDIKAPIEFSKSPKLESTTLSTGGGGSGSNTSNNLNKRSTSNNNNSQDPINTISKPTKIHHSSDVVSSFSWHPTNECRMLTVSYSGVIDVVSLNENIPISWSPHGGICFSFGNNVLEGPTKGETLEPNILNYKNLINDGRYEKDISSKIKERAIFGYSANVEENINLANKINDENINFLWKWIQKVPIQIQNFKRESSLISTPSISTTTPGGPITPSATTKTIINNNNNNNNNKNINNNINNINNNNNNNNNNNNNNNNNNNNNNNNNNNNNEYNGIYNILIEKDISTVESSNGFVIYKSPNRNLCLSICGWGFNQSLPLENILSRLEKSGEYERAAAIAVFHLDIKRAILVVTNATYNIHPVTQTNHHGHLMRQDREFSLKLLSIALAGFDGSSTSNNNNNNNNNNNNIWKETCKSTAKSFINPYLKTCLEFLASNSDSKDIYSIIEDSRINLDDKIAFSCKYLDYQDLIHFVERNTIRVIECGNLKGVLLTGLTGRGVDLLSNYIDRTCDIQTAVLAISLVVPKFFRDKRVSKWSSIYSDLLDQWELWHERAILDIQTRISGIDQPPTPQIFAKCGFCQNSFAFESISASSIVGRNASSKPNFKAKVPFCPHCKQSLPRCCLCLLPLNCMVPTPEFKKSNTTIGSGGGSIASSGGINNSGSINNPNDSQLWSNGSEPFEDWFTWCQTCRHGGHSQHILDWFKDHSICPVTSCDCRCSQL.

One copy of the WD 1 repeat lies at 3-43 (QSSTRKRLIQWSPHNKSSFIVGSNDLRLYNFKFKDKNEKKN). The interval 41–60 (KKNENNINNSNQYNQNNQQQ) is disordered. Over residues 45–60 (NNINNSNQYNQNNQQQ) the composition is skewed to low complexity. 5 WD repeats span residues 127–169 (KTIS…ILTS), 183–227 (KHTR…STTL), 281–321 (TQSE…SSQS), 324–364 (AHQK…DPLI), and 368–409 (SNCK…EFSK). A disordered region spans residues 413 to 455 (LESTTLSTGGGGSGSNTSNNLNKRSTSNNNNSQDPINTISKPT). Positions 427 to 444 (SNTSNNLNKRSTSNNNNS) are enriched in low complexity. The stretch at 459 to 499 (HSSDVVSSFSWHPTNECRMLTVSYSGVIDVVSLNENIPISW) is one WD 7 repeat. Residues 601 to 669 (PSISTTTPGG…NNNNNNNNNN (69 aa)) are disordered. The C4-type zinc-finger motif lies at 973–1016 (AKCGFCQNSFAFESISASSIVGRNASSKPNFKAKVPFCPHCKQS). The Zn(2+) site is built by Cys-975, Cys-978, Cys-1010, Cys-1013, Cys-1023, Cys-1085, Cys-1088, His-1090, His-1093, His-1096, Cys-1107, Cys-1112, and Cys-1116.

Belongs to the WD repeat mio family. In terms of assembly, probably part of the GATOR complex.

It is found in the lysosome membrane. As a component of the GATOR complex may function in the amino acid-sensing branch of the TORC1 signaling pathway. This chain is GATOR2 complex protein MIOS, found in Dictyostelium discoideum (Social amoeba).